Reading from the N-terminus, the 229-residue chain is Cytidylate kinase (229 aa).

10 to 18 (GYSSCGKST) serves as a coordination point for ATP.

This sequence belongs to the cytidylate kinase family. Type 1 subfamily.

It is found in the cytoplasm. It catalyses the reaction CMP + ATP = CDP + ADP. It carries out the reaction dCMP + ATP = dCDP + ADP. This Phocaeicola vulgatus (strain ATCC 8482 / DSM 1447 / JCM 5826 / CCUG 4940 / NBRC 14291 / NCTC 11154) (Bacteroides vulgatus) protein is Cytidylate kinase.